The sequence spans 1013 residues: Hemoglobin-binding protein A (1013 aa).

Positions 1–24 are cleaved as a signal peptide; the sequence is MTNFKFSLLACSIAFALNASTAYA. Repeat copies occupy residues 26 to 29, 30 to 33, 34 to 37, 38 to 41, 42 to 45, 46 to 49, 50 to 53, and 54 to 57. The segment at 26–57 is 8 X 4 AA tandem repeats of Q-P-T-N; the sequence is QPTNQPTNQPTNQPTNQPTNQPTNQPTNQPTN. Over residues 26–58 the composition is skewed to low complexity; it reads QPTNQPTNQPTNQPTNQPTNQPTNQPTNQPTNQ. The tract at residues 26-61 is disordered; that stretch reads QPTNQPTNQPTNQPTNQPTNQPTNQPTNQPTNQDSN. The TonB box motif lies at 67-74; the sequence is EQINVSGS. In terms of domain architecture, TBDR plug spans 78–205; the sequence is SDSKTPPKIA…LGGSVIYKTK (128 aa). A TBDR beta-barrel domain is found at 213-1013; it reads NKDYYVSYKK…NYKMSVQFEF (801 aa). The short motif at 996-1013 is the TonB C-terminal box element; that stretch reads NRFYAPGRNYKMSVQFEF.

Belongs to the TonB-dependent receptor family. Hemoglobin/haptoglobin binding protein subfamily.

It is found in the cell outer membrane. Its function is as follows. Acts as a receptor for hemoglobin of the human host and is required for heme uptake. This is Hemoglobin-binding protein A (hgbA) from Haemophilus influenzae.